A 344-amino-acid polypeptide reads, in one-letter code: Uroporphyrinogen decarboxylase (344 aa).

Residues 23–27, D73, Y149, T204, and H321 contribute to the substrate site; that span reads RQAGR.

It belongs to the uroporphyrinogen decarboxylase family. As to quaternary structure, homodimer.

It localises to the cytoplasm. The catalysed reaction is uroporphyrinogen III + 4 H(+) = coproporphyrinogen III + 4 CO2. The protein operates within porphyrin-containing compound metabolism; protoporphyrin-IX biosynthesis; coproporphyrinogen-III from 5-aminolevulinate: step 4/4. Catalyzes the decarboxylation of four acetate groups of uroporphyrinogen-III to yield coproporphyrinogen-III. The polypeptide is Uroporphyrinogen decarboxylase (Francisella tularensis subsp. tularensis (strain FSC 198)).